The following is a 334-amino-acid chain: Beta-ketoacyl-[acyl-carrier-protein] synthase III (334 aa).

Active-site residues include C114 and H260. Residues 261–265 (QANLR) are ACP-binding. Residue N290 is part of the active site.

The protein belongs to the thiolase-like superfamily. FabH family. In terms of assembly, homodimer.

It is found in the cytoplasm. The enzyme catalyses malonyl-[ACP] + acetyl-CoA + H(+) = 3-oxobutanoyl-[ACP] + CO2 + CoA. The protein operates within lipid metabolism; fatty acid biosynthesis. Its function is as follows. Catalyzes the condensation reaction of fatty acid synthesis by the addition to an acyl acceptor of two carbons from malonyl-ACP. Catalyzes the first condensation reaction which initiates fatty acid synthesis and may therefore play a role in governing the total rate of fatty acid production. Possesses both acetoacetyl-ACP synthase and acetyl transacylase activities. Its substrate specificity determines the biosynthesis of branched-chain and/or straight-chain of fatty acids. This Clostridium tetani (strain Massachusetts / E88) protein is Beta-ketoacyl-[acyl-carrier-protein] synthase III.